The following is a 67-amino-acid chain: Large ribosomal subunit protein bL31 (67 aa).

Belongs to the bacterial ribosomal protein bL31 family. Type A subfamily. Part of the 50S ribosomal subunit.

In terms of biological role, binds the 23S rRNA. In Helicobacter acinonychis (strain Sheeba), this protein is Large ribosomal subunit protein bL31.